Here is a 1321-residue protein sequence, read N- to C-terminus: Bile salt export pump (1321 aa).

Residues 1–62 are Cytoplasmic-facing; sequence MSDSVILRSV…FSSSKDIWLM (62 aa). An ABC transmembrane type-1 1 domain is found at 62 to 385; the sequence is MLMGGVCALL…ASSCLEIFST (324 aa). Residues 63–83 form a helical membrane-spanning segment; sequence LMGGVCALLHGMAQPGILIIF. At 84-147 the chain is on the extracellular side; sequence GIMTDIFIKY…MIKFSGIYAG (64 aa). N-linked (GlcNAc...) asparagine glycans are attached at residues N109, N116, N122, and N125. A helical membrane pass occupies residues 148–168; it reads VGMTVLILGYFQIRLWVITGA. At 169–215 the chain is on the cytoplasmic side; the sequence is RQIRRMRKIYFRRIMRMEIGWFDCTSVGELNSRFADDIEKINDAIAD. The helical transmembrane segment at 216–236 threads the bilayer; the sequence is QLAHFLQRMSTAMCGLLLGFY. Over 237 to 240 the chain is Extracellular; sequence RGWK. Residues 241-261 traverse the membrane as a helical segment; that stretch reads LTLVILAVSPLIGIGAAVIGL. The Cytoplasmic portion of the chain corresponds to 262–319; sequence SIAKFTELELKAYAKAGSIADEVLSSIRTVAAFGGENKEVERYEKNLVFAQRWGIWKG. The helical transmembrane segment at 320–340 threads the bilayer; that stretch reads MVMGFFTGYMWCLIFFCYALA. Residues 341–353 are Extracellular-facing; it reads FWYGSTLVLDEEE. Residues 354–374 traverse the membrane as a helical segment; the sequence is YTPGTLVQIFLCVILAAMNIG. At 375–755 the chain is on the cytoplasmic side; the sequence is HASSCLEIFS…KYNIPEWHYI (381 aa). An ABC transporter 1 domain is found at 420–656; that stretch reads IEFHNVTFHY…KGVYFMLVTL (237 aa). 455 to 462 lines the ATP pocket; it reads GSSGAGKS. T586 carries the phosphothreonine modification. Position 587 is a phosphoserine (S587). Residues 651 to 674 are interaction with HAX1; the sequence is FMLVTLQSQGDNAHKETSIMGKDA. Residues S692, S703, and S706 each carry the phosphoserine modification. The ABC transmembrane type-1 2 domain maps to 755–1043; it reads ILVGSLSAAI…TFSYTPSYAK (289 aa). A helical transmembrane segment spans residues 756 to 776; the sequence is LVGSLSAAINGAVTPIYSLLF. Over 777–794 the chain is Extracellular; sequence SQLLGTFSLLDKEQQRSE. Residues 795-815 traverse the membrane as a helical segment; it reads IHSMCLFFVILGCVSIFTQFL. At 816 to 869 the chain is on the cytoplasmic side; it reads QGYTFAKSGELLTKRLRKFGFKAMLGQDIGWFDDLRNNPGVLTTRLATDASQVQ. The next 2 helical transmembrane spans lie at 870–890 and 891–911; these read GATGSQVGMMVNSFTNIIAAL and LIAFFFSWKLSLIITIFFPFL. Over 912–979 the chain is Cytoplasmic; that stretch reads ALSGAVQTKM…SYKTAVRKAN (68 aa). The chain crosses the membrane as a helical span at residues 980–1000; that stretch reads IYGLCFAFSQGIAFLANSAAY. The Extracellular portion of the chain corresponds to 1001–1011; that stretch reads RYGGYLIAYEG. Residues 1012–1032 traverse the membrane as a helical segment; it reads LGFSHVFRVVSSVALSATAVG. Topologically, residues 1033-1321 are cytoplasmic; sequence RTFSYTPSYA…KLVITGAPIS (289 aa). In terms of domain architecture, ABC transporter 2 spans 1078 to 1316; the sequence is IDFIDCKFTY…KGAYYKLVIT (239 aa). 1113 to 1120 is an ATP binding site; the sequence is GSSGCGKS. S1321 is subject to Phosphoserine.

This sequence belongs to the ABC transporter superfamily. ABCB family. Multidrug resistance exporter (TC 3.A.1.201) subfamily. As to quaternary structure, interacts with HAX1. Interacts with the adapter protein complex 2 (AP-2) throught AP2A2 or AP2A1; this interaction regulates cell membrane expression of ABCB11 through its internalization in a clathrin-dependent manner and its subsequent degradation. Post-translationally, ubiquitinated; short-chain ubiquitination regulates cell-Surface expression of ABCB11. N-glycosylated. Expressed predominantly, if not exclusively in the liver, where it was further localized to the canalicular microvilli and to subcanalicular vesicles of the hepatocytes by in situ.

The protein resides in the apical cell membrane. The protein localises to the recycling endosome membrane. It localises to the endosome. Its subcellular location is the cell membrane. It catalyses the reaction cholate(in) + ATP + H2O = cholate(out) + ADP + phosphate + H(+). It carries out the reaction taurocholate(in) + ATP + H2O = taurocholate(out) + ADP + phosphate + H(+). The enzyme catalyses glycocholate(in) + ATP + H2O = glycocholate(out) + ADP + phosphate + H(+). The catalysed reaction is glycochenodeoxycholate(in) + ATP + H2O = glycochenodeoxycholate(out) + ADP + phosphate + H(+). It catalyses the reaction taurochenodeoxycholate(in) + ATP + H2O = taurochenodeoxycholate(out) + ADP + phosphate + H(+). It carries out the reaction glycoursodeoxycholate(in) + ATP + H2O = glycoursodeoxycholate(out) + ADP + phosphate + H(+). The enzyme catalyses tauroursodeoxycholate(in) + ATP + H2O = tauroursodeoxycholate(out) + ADP + phosphate + H(+). The catalysed reaction is taurodeoxycholate(in) + ATP + H2O = taurodeoxycholate(out) + ADP + phosphate + H(+). It catalyses the reaction pravastatin(in) + ATP + H2O = pravastatin(out) + ADP + phosphate + H(+). Its activity is regulated as follows. The uptake of taurocholate is inhibited by taurolithocholate sulfate with an IC(50) of 52.9 uM. Pravastatin competitively inhibits the transport of taurocholic acid. Cyclosporin A, glibenclamide, rifampicin and troglitazonestrongly competitively inhibit the transport activity of taurocholate. The canalicular transport activity of taurocholate is strongly dependent on canalicular membrane cholesterol content. The uptake of taurocholate is increased by short- and medium-chain fatty acids. Cholesterol increases transport capacity of taurocholate without affecting the affinity for the substrate. Catalyzes the transport of the major hydrophobic bile salts, such as taurine and glycine-conjugated cholic acid across the canalicular membrane of hepatocytes in an ATP-dependent manner, therefore participates in hepatic bile acid homeostasis and consequently to lipid homeostasis through regulation of biliary lipid secretion in a bile salts dependent manner. Transports taurine-conjugated bile salts more rapidly than glycine-conjugated bile salts. Also transports non-bile acid compounds, such as pravastatin and fexofenadine in an ATP-dependent manner and may be involved in their biliary excretion. The polypeptide is Bile salt export pump (Rattus norvegicus (Rat)).